A 1409-amino-acid chain; its full sequence is DNA-directed RNA polymerase subunit beta' (1409 aa).

Zn(2+) is bound by residues cysteine 69, cysteine 71, cysteine 84, and cysteine 87. Mg(2+)-binding residues include aspartate 461, aspartate 463, and aspartate 465. Residues cysteine 805, cysteine 879, cysteine 886, and cysteine 889 each contribute to the Zn(2+) site.

This sequence belongs to the RNA polymerase beta' chain family. As to quaternary structure, the RNAP catalytic core consists of 2 alpha, 1 beta, 1 beta' and 1 omega subunit. When a sigma factor is associated with the core the holoenzyme is formed, which can initiate transcription. It depends on Mg(2+) as a cofactor. Zn(2+) is required as a cofactor.

It catalyses the reaction RNA(n) + a ribonucleoside 5'-triphosphate = RNA(n+1) + diphosphate. Functionally, DNA-dependent RNA polymerase catalyzes the transcription of DNA into RNA using the four ribonucleoside triphosphates as substrates. This is DNA-directed RNA polymerase subunit beta' from Anaplasma phagocytophilum (strain HZ).